Consider the following 173-residue polypeptide: Crossover junction endodeoxyribonuclease RuvC (173 aa).

Residues Asp-8, Glu-67, and Asp-139 contribute to the active site. Mg(2+) contacts are provided by Asp-8, Glu-67, and Asp-139.

Belongs to the RuvC family. As to quaternary structure, homodimer which binds Holliday junction (HJ) DNA. The HJ becomes 2-fold symmetrical on binding to RuvC with unstacked arms; it has a different conformation from HJ DNA in complex with RuvA. In the full resolvosome a probable DNA-RuvA(4)-RuvB(12)-RuvC(2) complex forms which resolves the HJ. The cofactor is Mg(2+).

The protein localises to the cytoplasm. It carries out the reaction Endonucleolytic cleavage at a junction such as a reciprocal single-stranded crossover between two homologous DNA duplexes (Holliday junction).. In terms of biological role, the RuvA-RuvB-RuvC complex processes Holliday junction (HJ) DNA during genetic recombination and DNA repair. Endonuclease that resolves HJ intermediates. Cleaves cruciform DNA by making single-stranded nicks across the HJ at symmetrical positions within the homologous arms, yielding a 5'-phosphate and a 3'-hydroxyl group; requires a central core of homology in the junction. The consensus cleavage sequence is 5'-(A/T)TT(C/G)-3'. Cleavage occurs on the 3'-side of the TT dinucleotide at the point of strand exchange. HJ branch migration catalyzed by RuvA-RuvB allows RuvC to scan DNA until it finds its consensus sequence, where it cleaves and resolves the cruciform DNA. This chain is Crossover junction endodeoxyribonuclease RuvC, found in Pectobacterium carotovorum subsp. carotovorum (strain PC1).